Here is a 137-residue protein sequence, read N- to C-terminus: Small ribosomal subunit protein uS9 (137 aa).

Over residues 106–117 (KTEGYLTRDPRA) the composition is skewed to basic and acidic residues. The tract at residues 106–137 (KTEGYLTRDPRAKERRKYGLRKARKAPQYSKR) is disordered. Residues 118–137 (KERRKYGLRKARKAPQYSKR) show a composition bias toward basic residues.

The protein belongs to the universal ribosomal protein uS9 family.

The chain is Small ribosomal subunit protein uS9 from Thermosynechococcus vestitus (strain NIES-2133 / IAM M-273 / BP-1).